The following is a 68-amino-acid chain: MKVLLLFAVFFCLVQRNSGDIPPGIRNTVCFMQRGHCRLFMCRSGERKGDICSDPWNRCCVSSSIKNR.

The first 19 residues, 1 to 19 (MKVLLLFAVFFCLVQRNSG), serve as a signal peptide directing secretion. Disulfide bonds link Cys-30–Cys-59, Cys-37–Cys-52, and Cys-42–Cys-60.

It belongs to the beta-defensin family. In terms of tissue distribution, only expressed in epididymis (middle part of the caput).

Its subcellular location is the secreted. In terms of biological role, has antimicrobial activity against E.coli. Plays a role in the defense response in the male reproductive tract, contributing to sperm maturation, storage and protection. The polypeptide is Sperm-associated antigen 11A (Rattus norvegicus (Rat)).